The primary structure comprises 114 residues: Iron-sulfur cluster insertion protein ErpA (114 aa).

Residues cysteine 42, cysteine 106, and cysteine 108 each contribute to the iron-sulfur cluster site.

This sequence belongs to the HesB/IscA family. In terms of assembly, homodimer. Iron-sulfur cluster is required as a cofactor.

Functionally, required for insertion of 4Fe-4S clusters for at least IspG. The sequence is that of Iron-sulfur cluster insertion protein ErpA from Klebsiella pneumoniae (strain 342).